We begin with the raw amino-acid sequence, 56 residues long: Prokaryotic ubiquitin-like protein UBact (56 aa).

Positions 1–56 (MPDQAQKTRPVGPGPSGGGEGPGSPKVEKPNTEELLKRMRKVDPDQAKRYRQRTGQ) are disordered. Over residues 26-48 (KVEKPNTEELLKRMRKVDPDQAK) the composition is skewed to basic and acidic residues. Q56 is modified (deamidated glutamine). Q56 participates in a covalent cross-link: Isoglutamyl lysine isopeptide (Gln-Lys) (interchain with K-? in acceptor proteins).

The protein belongs to the ubiquitin-like protein UBact family. In terms of processing, may be modified by deamidation of its C-terminal glutamine to glutamate by the adjacently encoded deamidase. This could be a prerequisite to the subsequent conjugation, as shown in the other prokaryotic ubiquitin-like protein Pup.

In terms of biological role, may function as a protein modifier covalently attached to lysine residues of substrate proteins. This may serve to target the modified proteins for degradation by proteasomes. This chain is Prokaryotic ubiquitin-like protein UBact, found in Pedosphaera parvula (strain Ellin514).